Here is a 137-residue protein sequence, read N- to C-terminus: Phosphoribosyl-AMP cyclohydrolase (137 aa).

Aspartate 84 is a binding site for Mg(2+). Cysteine 85 contributes to the Zn(2+) binding site. Residues aspartate 86 and aspartate 88 each contribute to the Mg(2+) site. Residues cysteine 101 and cysteine 108 each contribute to the Zn(2+) site.

The protein belongs to the PRA-CH family. As to quaternary structure, homodimer. Requires Mg(2+) as cofactor. Zn(2+) is required as a cofactor.

The protein resides in the cytoplasm. It catalyses the reaction 1-(5-phospho-beta-D-ribosyl)-5'-AMP + H2O = 1-(5-phospho-beta-D-ribosyl)-5-[(5-phospho-beta-D-ribosylamino)methylideneamino]imidazole-4-carboxamide. It functions in the pathway amino-acid biosynthesis; L-histidine biosynthesis; L-histidine from 5-phospho-alpha-D-ribose 1-diphosphate: step 3/9. Functionally, catalyzes the hydrolysis of the adenine ring of phosphoribosyl-AMP. The chain is Phosphoribosyl-AMP cyclohydrolase from Chlorobium phaeovibrioides (strain DSM 265 / 1930) (Prosthecochloris vibrioformis (strain DSM 265)).